A 289-amino-acid polypeptide reads, in one-letter code: Protease HtpX homolog (289 aa).

2 helical membrane passes run 11–31 (AALFGVLWAVLLGLGAIIAAG) and 34–54 (STTPIWIMALIGVATTAYGYW). A Zn(2+)-binding site is contributed by H138. E139 is a catalytic residue. H142 contributes to the Zn(2+) binding site. Transmembrane regions (helical) follow at residues 152 to 172 (SVVAAVAGVITSVGQMLLIFG) and 182 to 202 (LATIAMALLAPFAASLIQMAI). Position 207 (E207) interacts with Zn(2+).

This sequence belongs to the peptidase M48B family. Requires Zn(2+) as cofactor.

The protein resides in the cell membrane. This Paenarthrobacter aurescens (strain TC1) protein is Protease HtpX homolog.